Consider the following 338-residue polypeptide: POU domain, class 4, transcription factor 3 (338 aa).

Positions 56–65 match the POU-IV box motif; sequence RAEALAAVDI. In terms of domain architecture, POU-specific spans 179 to 256; that stretch reads DVESDPRELE…VLQAWLEEAE (78 aa). Positions 274-333 form a DNA-binding region, homeobox; that stretch reads RKRKRTSIAAPEKRSLEAYFAIQPRPSSEKIAAIAEKLDLKKNVVRVWFCNQRQKQKRMK.

Belongs to the POU transcription factor family. Class-4 subfamily. Interacts with ISL1. In terms of tissue distribution, brain. Seems to be specific to the retina.

Its subcellular location is the nucleus. It localises to the cytoplasm. Functionally, acts as a transcriptional activator. Acts by binding to sequences related to the consensus octamer motif 5'-ATGCAAAT-3' in the regulatory regions of its target genes. Involved in the auditory system development, required for terminal differentiation of hair cells in the inner ear. This is POU domain, class 4, transcription factor 3 (POU4F3) from Homo sapiens (Human).